Consider the following 923-residue polypeptide: Isoleucine--tRNA ligase (923 aa).

A 'HIGH' region motif is present at residues 57 to 67 (PYANGDIHIGT). E561 lines the L-isoleucyl-5'-AMP pocket. Residues 602 to 606 (AMHKS) carry the 'KMSKS' region motif. K605 contributes to the ATP binding site. The Zn(2+) site is built by C895, C898, C915, and C918.

It belongs to the class-I aminoacyl-tRNA synthetase family. IleS type 1 subfamily. As to quaternary structure, monomer. The cofactor is Zn(2+).

The protein localises to the cytoplasm. It catalyses the reaction tRNA(Ile) + L-isoleucine + ATP = L-isoleucyl-tRNA(Ile) + AMP + diphosphate. In terms of biological role, catalyzes the attachment of isoleucine to tRNA(Ile). As IleRS can inadvertently accommodate and process structurally similar amino acids such as valine, to avoid such errors it has two additional distinct tRNA(Ile)-dependent editing activities. One activity is designated as 'pretransfer' editing and involves the hydrolysis of activated Val-AMP. The other activity is designated 'posttransfer' editing and involves deacylation of mischarged Val-tRNA(Ile). The protein is Isoleucine--tRNA ligase of Brachyspira hyodysenteriae (strain ATCC 49526 / WA1).